The sequence spans 496 residues: Angiopoietin-2 (496 aa).

Residues 1-18 (MWQIVFFTLSCDLVLAAA) form the signal peptide. 6 N-linked (GlcNAc...) asparagine glycosylation sites follow: N89, N119, N133, N151, N240, and N304. Positions 166-248 (STNKLEKQIL…VNNSVLQKQQ (83 aa)) form a coiled coil. One can recognise a Fibrinogen C-terminal domain in the interval 275–495 (KEEQISFRDC…ATTMMIRPAD (221 aa)). C284 and C313 form a disulfide bridge. Residues D429, D431, C433, and C435 each contribute to the Ca(2+) site. Intrachain disulfides connect C433-C435 and C437-C450.

In terms of assembly, interacts with TEK/TIE2, competing for the same binding site as ANGPT1. Interacts with ITGA5. Interacts with SVEP1/polydom. Interacts with THBD; this interaction significantly inhibits the generation of activated PC and TAFIa/CPB2 by the thrombin/thrombomodulin complex.

The protein resides in the secreted. In terms of biological role, binds to TEK/TIE2, competing for the ANGPT1 binding site, and modulating ANGPT1 signaling. Can induce tyrosine phosphorylation of TEK/TIE2 in the absence of ANGPT1. In the absence of angiogenic inducers, such as VEGF, ANGPT2-mediated loosening of cell-matrix contacts may induce endothelial cell apoptosis with consequent vascular regression. In concert with VEGF, it may facilitate endothelial cell migration and proliferation, thus serving as a permissive angiogenic signal. Involved in the regulation of lymphangiogenesis. This is Angiopoietin-2 (ANGPT2) from Homo sapiens (Human).